The chain runs to 186 residues: Ribosome-recycling factor (186 aa).

It belongs to the RRF family.

It localises to the cytoplasm. Functionally, responsible for the release of ribosomes from messenger RNA at the termination of protein biosynthesis. May increase the efficiency of translation by recycling ribosomes from one round of translation to another. This chain is Ribosome-recycling factor, found in Rickettsia akari (strain Hartford).